We begin with the raw amino-acid sequence, 139 residues long: I-Kappa-B like protein N1 (139 aa).

3 ANK repeats span residues 16–48 (NGEN…QYLL), 54–87 (EGRK…DVNG), and 92–122 (TGDT…NINA).

It belongs to the polydnaviridae I-Kappa-B-like protein family.

In terms of biological role, suppresses the host immune response through NF-kappa-B inactivation. Possesses ankyrin repeat domain required for NF-kappa-B binding but lack the regulatory regions required for dissociation from NF-kappa-B and degradation. Therefore, prevents host NF-kappa-B release and subsequent activation. The polypeptide is I-Kappa-B like protein N1 (N2) (Microplitis demolitor bracovirus (isolate Webb) (MdBV)).